Here is a 284-residue protein sequence, read N- to C-terminus: MEMO1 family protein YG5714_2180 (284 aa).

This sequence belongs to the MEMO1 family.

The sequence is that of MEMO1 family protein YG5714_2180 from Saccharolobus islandicus (strain Y.G.57.14 / Yellowstone #1) (Sulfolobus islandicus).